We begin with the raw amino-acid sequence, 312 residues long: Transcription initiation factor IIB 1 (312 aa).

The TFIIB-type zinc-finger motif lies at 12-43 (EIERCPECGSTNLIRDYEHGELVCGECGAVIE). Cys16, Cys19, Cys35, and Cys38 together coordinate Zn(2+). 2 repeat units span residues 129–212 (QELE…SRYL) and 223–304 (DYIS…ELTE).

Belongs to the TFIIB family.

Functionally, stabilizes TBP binding to an archaeal box-A promoter. Also responsible for recruiting RNA polymerase II to the pre-initiation complex (DNA-TBP-TFIIB). This Thermoplasma volcanium (strain ATCC 51530 / DSM 4299 / JCM 9571 / NBRC 15438 / GSS1) protein is Transcription initiation factor IIB 1.